The sequence spans 508 residues: Amphoterin-induced protein 3 (508 aa).

An N-terminal signal peptide occupies residues 1 to 19; that stretch reads MAWLVLSGILLCMLGAGLG. Residues 20 to 383 lie on the Extracellular side of the membrane; sequence TSDLEDVLPP…ARPEPETFNT (364 aa). Residues 25–61 form the LRRNT domain; sequence DVLPPAPHNCPDICICAADVLSCAGRGLQDLPVALPT. Disulfide bonds link Cys-34–Cys-40 and Cys-38–Cys-47. 6 LRR repeats span residues 62 to 83, 86 to 107, 110 to 133, 134 to 155, 158 to 178, and 184 to 207; these read TAAELDLSHNALKRLHPGWLAP, RLRALHLGYNKLEVLGHGAFTN, GLRTLDLSSNMLRMLHTHDLDGLE, ELEKLLLFNNSLMHLDLDAFQG, MLSHLYLSCNELSSFSFNHLH, and RLRTLDLSSNWLKHISIPELAALP. An N-linked (GlcNAc...) asparagine glycan is attached at Asn-107. A glycan (N-linked (GlcNAc...) asparagine) is linked at Asn-142. The region spanning 219-275 is the LRRCT domain; it reads NPLPCDCSLYHLLRRWHQRGLSALHDFEREYTCLVFKVSESRVRFFEHSRVFKNCSV. 3 cysteine pairs are disulfide-bonded: Cys-223–Cys-251, Cys-225–Cys-273, and Cys-300–Cys-352. N-linked (GlcNAc...) asparagine glycans are attached at residues Asn-272, Asn-301, Asn-362, and Asn-368. One can recognise an Ig-like C2-type domain in the interval 279–370; the sequence is PGLELPEEQL…HNQTLEYNVS (92 aa). Residues 384 to 404 traverse the membrane as a helical segment; it reads GFTTLLGCIVGLVLVLLYLFA. Over 405–508 the chain is Cytoplasmic; that stretch reads PPCRGCCHCC…STGSEGLVMS (104 aa).

It belongs to the immunoglobulin superfamily. AMIGO family. In terms of assembly, binds AMIGO1 or AMIGO2. In terms of tissue distribution, ubiquitous.

It is found in the membrane. May mediate heterophilic cell-cell interaction. May contribute to signal transduction through its intracellular domain. The sequence is that of Amphoterin-induced protein 3 from Mus musculus (Mouse).